Reading from the N-terminus, the 460-residue chain is MDYNKILQGKYPAKQHAKRVSDYIRDKIPNATGVLYLEGRATKMIEDNDSEEHFRQRRYFYYLTGCPLADSYVIHDMDSSKTTLFIPPVDPESVIWSGLPVSAEEALSNWDVDEVKYTNEINATLAHVGASKANATLYAIPNQVSEKVTFLEFDHKNFSILKEAIEVTRVVKDEYEIAMIGKANQISSRAHELVMKKVKHVKNERELEAVFLAECISNGARDQAYHSIVAAGRAAATLHYVANNAPLDGKLNLLLDAGGEWNCYASDITRTFPINGKFTTESRAIYDIVLKMQLECIATLKEGVVWDDVHTLAHKIAIDGLLELGILKGDKEAILESRTSVAFFPHGLGHYLGMDTHDTGGNANYADKDTMFRYLRVRGTLPAGSVITVEPGLYFCNFIIEPFLNDPKHSQYINRPVLDRYWDVGGVRIEDNIVITKRGTQNLTTAVKDPDEMERLIASS.

Asp-256, Asp-267, Glu-390, and Glu-430 together coordinate Mn(2+).

It belongs to the peptidase M24B family. It depends on Mn(2+) as a cofactor.

It carries out the reaction Release of any N-terminal amino acid, including proline, that is linked to proline, even from a dipeptide or tripeptide.. Its function is as follows. Catalyzes the removal of a penultimate prolyl residue from the N-termini of peptides. The protein is Probable Xaa-Pro aminopeptidase PEPP (PEPP) of Podospora anserina (strain S / ATCC MYA-4624 / DSM 980 / FGSC 10383) (Pleurage anserina).